The primary structure comprises 490 residues: Transmembrane protease serine 2 (490 aa).

Residues 1–83 lie on the Cytoplasmic side of the membrane; it reads MALNSGSPPG…ALCTSKSKKS (83 aa). Residues 84 to 104 traverse the membrane as a helical; Signal-anchor for type II membrane protein segment; the sequence is LCLALALGTVLTGAAVAAVLL. Topologically, residues 105–490 are extracellular; the sequence is WRFWDSNCST…WIYQQMRANS (386 aa). N111 carries an N-linked (GlcNAc...) asparagine glycan. The 39-residue stretch at 111–149 folds into the LDL-receptor class A domain; the sequence is NCSTSEMECGSSGTCISSSLWCDGVAHCPNGEDENRCVR. 9 cysteine pairs are disulfide-bonded: C112-C125, C119-C138, C132-C147, C171-C230, C184-C240, C243-C363, C279-C295, C408-C424, and C435-C463. 4 residues coordinate Ca(2+): D133, V135, D143, and E144. The 93-residue stretch at 150–242 folds into the SRCR domain; it reads LYGQSFILQV…RMVVSLRCIE (93 aa). An N-linked (GlcNAc...) asparagine glycan is attached at N212. Residues 254 to 487 form the Peptidase S1 domain; that stretch reads IVGGLNASPG…FTDWIYQQMR (234 aa). Active-site charge relay system residues include H294 and D343. Residue S439 is the Charge relay system of the active site. The N-linked (GlcNAc...) asparagine glycan is linked to N474.

The protein belongs to the peptidase S1 family. As to quaternary structure, the catalytically active form interacts with ACE2. Proteolytically processed; by an autocatalytic mechanism. Autocleavage induces active conformation. In terms of tissue distribution, larynx, trachea and bronchi, lung, prostate and kidney.

It is found in the cell membrane. Its subcellular location is the secreted. It carries out the reaction The enzyme cleaves angiotensin-converting enzyme 2 (EC 3.4.17.23) and cleaves influenzea A and B virus and coronavirus spike glycoproteins at arginine residues.. Its function is as follows. Plasma membrane-anchored serine protease that cleaves at arginine residues. Participates in proteolytic cascades of relevance for the normal physiologic function of the prostate. Androgen-induced TMPRSS2 activates several substrates that include pro-hepatocyte growth factor/HGF, the protease activated receptor-2/F2RL1 or matriptase/ST14 leading to extracellular matrix disruption. In addition, activates trigeminal neurons and contribute to both spontaneous pain and mechanical allodynia. In terms of biological role, (Microbial infection) Essential for spread and pathogenesis of influenza A virus (strains H1N1, H3N2 and H7N9) and is involved in proteolytic cleavage and activation of hemagglutinin (HA) protein which is essential for viral infectivity. The chain is Transmembrane protease serine 2 (Tmprss2) from Mus musculus (Mouse).